The primary structure comprises 114 residues: Large ribosomal subunit protein bL20 (114 aa).

The protein belongs to the bacterial ribosomal protein bL20 family.

Binds directly to 23S ribosomal RNA and is necessary for the in vitro assembly process of the 50S ribosomal subunit. It is not involved in the protein synthesizing functions of that subunit. The chain is Large ribosomal subunit protein bL20 from Amoebophilus asiaticus (strain 5a2).